Here is a 224-residue protein sequence, read N- to C-terminus: Paired immunoglobulin-like type 2 receptor beta (224 aa).

A signal peptide spans 1-28 (MALLISLPGGTPAMAQVLLLLSSGCLHA). The Extracellular portion of the chain corresponds to 29 to 195 (GNSERYNRKN…NPSLMNLGAM (167 aa)). Asn90, Asn107, and Asn154 each carry an N-linked (GlcNAc...) asparagine glycan. Residues 196 to 216 (VTMLLAKVLVIVLVYGWMIFL) form a helical membrane-spanning segment. Topologically, residues 217 to 224 (RWKQRPAH) are cytoplasmic.

As to quaternary structure, interacts with CD99. Probably associates with DAP12. As to expression, widely expressed with highest levels in spleen, liver and lung. Predominantly expressed by natural killer cells, macrophages, and granulocytes and dendritic cells (BM-DC).

It is found in the membrane. Paired receptors consist of highly related activating and inhibitory receptors and are widely involved in the regulation of the immune system. PILRB is thought to act as a cellular signaling activating receptor that associates with ITAM-bearing adapter molecules on the cell surface. Seems to associate with DAP12 and is a receptor for CD99. May be involved in target cell recognition by natural killer cells and in activation of dendritic cells. In Mus musculus (Mouse), this protein is Paired immunoglobulin-like type 2 receptor beta (Pilrb).